We begin with the raw amino-acid sequence, 585 residues long: UvrABC system protein C (585 aa).

The GIY-YIG domain maps to 15-90; sequence AEPGVYQFLE…IKRHQPRYNV (76 aa). The UVR domain occupies 198–233; the sequence is GILADPLRQEMQAAATAEEFERAANIRDRLAVIESF.

It belongs to the UvrC family. Interacts with UvrB in an incision complex.

Its subcellular location is the cytoplasm. Functionally, the UvrABC repair system catalyzes the recognition and processing of DNA lesions. UvrC both incises the 5' and 3' sides of the lesion. The N-terminal half is responsible for the 3' incision and the C-terminal half is responsible for the 5' incision. This chain is UvrABC system protein C, found in Haloquadratum walsbyi (strain DSM 16790 / HBSQ001).